A 265-amino-acid chain; its full sequence is Silaffin-1 (265 aa).

The N-terminal stretch at 1–19 (MKLTAIFPLLFTAVGYCAA) is a signal peptide. A propeptide spans 20 to 107 (QSIADLAAAN…DSEEEELRIL (88 aa)) (acidic). The interval 37–106 (SAQLISADSS…EDSEEEELRI (70 aa)) is disordered. The segment covering 51–90 (DSSVESVDAASSDVSGSSVESVDVSGSSLESVDVSGSSLE) has biased composition (low complexity). Over residues 91–103 (SVDDSSEDSEEEE) the composition is skewed to acidic residues. An R1; atypical repeat occupies 108–140 (SSKKSGSYYSYGTKKSGSYSGYSTKKSASRRIL). Residues 108–257 (SSKKSGSYYS…GSKGSKRRIL (150 aa)) form a 7 X 19 AA repeat of S-S-K-K-S-G-S-Y-S-G-S-K-G-S-K-R-R-[IL]-L region. Lys-110 is modified (N6-poly(methylaminopropyl)lysine). N6,N6-dimethyllysine is present on Lys-111. Positions 122–133 (KSGSYSGYSTKK) are enriched in low complexity. The segment at 122 to 265 (KSGSYSGYST…ILSGGLRGSM (144 aa)) is disordered. Residues 137–140 (RRIL) constitute a propeptide that is removed on maturation. Residues 141-162 (SSKKSGSYSGYSTKKSGSRRIL) form an R2; atypical repeat. Residues 142-155 (SKKSGSYSGYSTKK) show a composition bias toward low complexity. Lys-143 bears the N6-poly(methylaminopropyl)lysine mark. Lys-144 bears the N6,N6-dimethyllysine mark. The residue at position 154 (Lys-154) is an N6-poly(methylaminopropyl)lysine. Lys-155 carries the post-translational modification N6,N6-dimethyllysine. Positions 159 to 162 (RRIL) are excised as a propeptide. Phosphoserine is present on residues Ser-163 and Ser-164. The R3 repeat unit spans residues 163-181 (SSKKSGSYSGSKGSKRRIL). Low complexity predominate over residues 164–174 (SKKSGSYSGSK). Residue Lys-165 is modified to N6-poly(methylaminopropyl)lysine. Lys-166 is modified (N6,N6-dimethyllysine). 4 positions are modified to phosphoserine: Ser-167, Ser-169, Ser-171, and Ser-173. At Lys-174 the chain carries N6,N6,N6-trimethyl-5-hydroxylysine. At Ser-176 the chain carries Phosphoserine. Lys-177 bears the N6-poly(methylaminopropyl)lysine mark. A propeptide spanning residues 178-181 (RRIL) is cleaved from the precursor. Phosphoserine occurs at positions 182 and 183. Residues 182–200 (SSKKSGSYSGSKGSKRRNL) form an R4 repeat. Residues 183–193 (SKKSGSYSGSK) are compositionally biased toward low complexity. Lys-184 carries the post-translational modification N6-poly(methylaminopropyl)lysine. At Lys-185 the chain carries N6,N6-dimethyllysine. Residues Ser-186, Ser-188, Ser-190, and Ser-192 each carry the phosphoserine modification. Lys-193 carries the post-translational modification N6,N6,N6-trimethyl-5-hydroxylysine. Ser-195 carries the post-translational modification Phosphoserine. Lys-196 is modified (N6-poly(methylaminopropyl)lysine). Residues 197–200 (RRNL) constitute a propeptide that is removed on maturation. Phosphoserine occurs at positions 201 and 202. The R5 repeat unit spans residues 201–219 (SSKKSGSYSGSKGSKRRIL). Low complexity predominate over residues 202–212 (SKKSGSYSGSK). Lys-203 carries the N6-poly(methylaminopropyl)lysine modification. Residue Lys-204 is modified to N6,N6-dimethyllysine. Phosphoserine is present on residues Ser-205, Ser-207, Ser-209, and Ser-211. Lys-212 carries the post-translational modification N6,N6,N6-trimethyl-5-hydroxylysine. Ser-214 is subject to Phosphoserine. Lys-215 bears the N6-poly(methylaminopropyl)lysine mark. Positions 216-219 (RRIL) are excised as a propeptide. A phosphoserine mark is found at Ser-220 and Ser-221. The R6 repeat unit spans residues 220–238 (SSKKSGSYSGSKGSKRRNL). Low complexity predominate over residues 221–231 (SKKSGSYSGSK). At Lys-222 the chain carries N6-poly(methylaminopropyl)lysine. At Lys-223 the chain carries N6,N6-dimethyllysine. Residues Ser-224, Ser-226, Ser-228, and Ser-230 each carry the phosphoserine modification. Position 231 is an N6,N6,N6-trimethyl-5-hydroxylysine (Lys-231). Ser-233 is modified (phosphoserine). Residue Lys-234 is modified to N6-poly(methylaminopropyl)lysine. A propeptide spanning residues 235-238 (RRNL) is cleaved from the precursor. 2 positions are modified to phosphoserine: Ser-239 and Ser-240. The stretch at 239 to 257 (SSKKSGSYSGSKGSKRRIL) is one R7 repeat. A compositionally biased stretch (low complexity) spans 240-250 (SKKSGSYSGSK). Lys-241 carries the N6-poly(methylaminopropyl)lysine modification. Position 242 is an N6,N6-dimethyllysine (Lys-242). Phosphoserine is present on residues Ser-243, Ser-245, Ser-247, and Ser-249. Lys-250 carries the post-translational modification N6,N6,N6-trimethyl-5-hydroxylysine. Ser-252 is subject to Phosphoserine. At Lys-253 the chain carries N6-poly(methylaminopropyl)lysine. Positions 254–265 (RRILSGGLRGSM) are excised as a propeptide.

As to quaternary structure, silaffin-1A peptides form large aggregates via electrostatic interactions due to intermolecular interactions between the negatively charged phosphate groups and the polyamine moieties. Post-translationally, N6-polymethylaminopropylated. Two lysine residues of each peptide bears 6 to 11 repeats of methyl-propylamine, which gives a possible template for nucleation, and may also control the silica colloid size within the silica deposition vesicle (SDV). Phosphorylated. All serine residues of the Silaffin-1A1 peptide are phosphorylated. Only minor amounts of the Silaffin-1A2 peptide are phosphorylated. Phosphorylation is essential for the activity. It may represent a source of anions required for silica formation of diatoms.

Catalyzes the polymerization of silica spheres from a silicilic acid solution. It therefore plays a central role in the formation of silica cell wall of diatoms. The polypeptide is Silaffin-1 (SIL1) (Cylindrotheca fusiformis (Marine diatom)).